The chain runs to 490 residues: Lipoprotein lipase (490 aa).

The N-terminal stretch at methionine 1 to glycine 25 is a signal peptide. The interaction with GPIHBP1 stretch occupies residues methionine 32–valine 53. An intrachain disulfide couples cysteine 54 to cysteine 67. A glycan (N-linked (GlcNAc...) (complex) asparagine) is linked at asparagine 70. Tyrosine 121 is subject to 3'-nitrotyrosine. The Nucleophile role is filled by serine 159. The active-site Charge relay system is the aspartate 183. Position 191 is a 3'-nitrotyrosine (tyrosine 191). Alanine 194, arginine 197, serine 199, and aspartate 202 together coordinate Ca(2+). A disulfide bridge connects residues cysteine 243 and cysteine 266. The tract at residues cysteine 243–cysteine 266 is essential for determining substrate specificity. Catalysis depends on histidine 268, which acts as the Charge relay system. Disulfide bonds link cysteine 291-cysteine 310 and cysteine 302-cysteine 305. Positions phenylalanine 341–lysine 464 constitute a PLAT domain. Tyrosine 343 carries the post-translational modification 3'-nitrotyrosine. Asparagine 354 and asparagine 386 each carry an N-linked (GlcNAc...) asparagine glycan. The interval tryptophan 417–tryptophan 421 is important for interaction with lipoprotein particles. The tract at residues arginine 430–lysine 434 is important for heparin binding. Residue arginine 430 to lysine 441 coordinates heparin. The interval valine 443 to glutamate 467 is interaction with GPIHBP1. An intrachain disulfide couples cysteine 445 to cysteine 465. The interval serine 471 to alanine 490 is disordered. The span at alanine 480–alanine 490 shows a compositional bias: basic and acidic residues.

The protein belongs to the AB hydrolase superfamily. Lipase family. In terms of assembly, homodimer. Interacts with GPIHBP1 with 1:1 stoichiometry. Interacts with APOC2; the interaction activates LPL activity in the presence of lipids. Interaction with heparan sulfate proteoglycans is required to protect LPL against loss of activity. Associates with lipoprotein particles in blood plasma. Interacts with LMF1 and SEL1L; interaction with SEL1L is required to prevent aggregation of newly synthesized LPL in the endoplasmic reticulum (ER), and for normal export of LPL from the ER to the extracellular space. In terms of processing, N-glycan at Asn-70 is a triantennary complex oligosaccharide containing sialic acid, galactose, mannose, and N-acetylglucosamine, the reducing GlcNAc being sulfated at C6. Post-translationally, tyrosine nitration after lipopolysaccharide (LPS) challenge down-regulates the lipase activity.

It is found in the cell membrane. The protein resides in the secreted. The protein localises to the extracellular space. It localises to the extracellular matrix. It catalyses the reaction a triacylglycerol + H2O = a diacylglycerol + a fatty acid + H(+). The catalysed reaction is a 1,2-diacyl-sn-glycero-3-phosphocholine + H2O = a 2-acyl-sn-glycero-3-phosphocholine + a fatty acid + H(+). The enzyme catalyses 1,2,3-tri-(9Z-octadecenoyl)-glycerol + H2O = di-(9Z)-octadecenoylglycerol + (9Z)-octadecenoate + H(+). It carries out the reaction 1,2-di-(9Z-octadecenoyl)-sn-glycero-3-phosphocholine + H2O = (9Z-octadecenoyl)-sn-glycero-3-phosphocholine + (9Z)-octadecenoate + H(+). It catalyses the reaction 1,2,3-tributanoylglycerol + H2O = dibutanoylglycerol + butanoate + H(+). The catalysed reaction is 1,2-dihexadecanoyl-sn-glycero-3-phosphocholine + H2O = hexadecanoyl-sn-glycero-3-phosphocholine + hexadecanoate + H(+). Its activity is regulated as follows. Ca(2+) binding promotes protein stability and formation of the active homodimer. Its function is as follows. Key enzyme in triglyceride metabolism. Catalyzes the hydrolysis of triglycerides from circulating chylomicrons and very low density lipoproteins (VLDL), and thereby plays an important role in lipid clearance from the blood stream, lipid utilization and storage. Although it has both phospholipase and triglyceride lipase activities it is primarily a triglyceride lipase with low but detectable phospholipase activity. Mediates margination of triglyceride-rich lipoprotein particles in capillaries. Recruited to its site of action on the luminal surface of vascular endothelium by binding to GPIHBP1 and cell surface heparan sulfate proteoglycans. The protein is Lipoprotein lipase (LPL) of Gallus gallus (Chicken).